A 507-amino-acid polypeptide reads, in one-letter code: GMP synthase [glutamine-hydrolyzing] 1 (507 aa).

In terms of domain architecture, Glutamine amidotransferase type-1 spans 4–193 (KIIILDFGSQ…VVDVCGCKQD (190 aa)). The active-site Nucleophile is the cysteine 79. Active-site residues include histidine 167 and glutamate 169. One can recognise a GMPS ATP-PPase domain in the interval 194-382 (WSPASFIEST…LGMPEHLITR (189 aa)). 221 to 227 (SGGVDSS) is an ATP binding site.

As to quaternary structure, homodimer.

It carries out the reaction XMP + L-glutamine + ATP + H2O = GMP + L-glutamate + AMP + diphosphate + 2 H(+). It participates in purine metabolism; GMP biosynthesis; GMP from XMP (L-Gln route): step 1/1. Its function is as follows. Catalyzes the synthesis of GMP from XMP. This Bacteroides thetaiotaomicron (strain ATCC 29148 / DSM 2079 / JCM 5827 / CCUG 10774 / NCTC 10582 / VPI-5482 / E50) protein is GMP synthase [glutamine-hydrolyzing] 1 (guaA1).